Consider the following 511-residue polypeptide: Maturase K (511 aa).

The protein belongs to the intron maturase 2 family. MatK subfamily.

The protein resides in the plastid. Its subcellular location is the chloroplast. Its function is as follows. Usually encoded in the trnK tRNA gene intron. Probably assists in splicing its own and other chloroplast group II introns. This Mandragora officinarum (Mandrake) protein is Maturase K.